The sequence spans 336 residues: Fructose-1,6-bisphosphatase class 1 (336 aa).

Mg(2+)-binding residues include glutamate 90, aspartate 112, leucine 114, and aspartate 115. Residues 115 to 118 (DGSS), asparagine 211, and lysine 277 each bind substrate. Glutamate 283 contributes to the Mg(2+) binding site.

This sequence belongs to the FBPase class 1 family. Homotetramer. The cofactor is Mg(2+).

Its subcellular location is the cytoplasm. It carries out the reaction beta-D-fructose 1,6-bisphosphate + H2O = beta-D-fructose 6-phosphate + phosphate. The protein operates within carbohydrate biosynthesis; gluconeogenesis. In Pseudomonas aeruginosa (strain ATCC 15692 / DSM 22644 / CIP 104116 / JCM 14847 / LMG 12228 / 1C / PRS 101 / PAO1), this protein is Fructose-1,6-bisphosphatase class 1.